Consider the following 1117-residue polypeptide: Sodium-driven chloride bicarbonate exchanger (1117 aa).

Disordered regions lie at residues 1–23 (MEIKDQGAQMEPLLPTRNDEEAV) and 58–97 (GRKSHRRHRHRGHKHRKRDRERDSGLEDGGESPSFDTPSQ). Residues 1 to 508 (MEIKDQGAQM…DFRDAFSLQC (508 aa)) are Cytoplasmic-facing. Basic residues predominate over residues 59–76 (RKSHRRHRHRGHKHRKRD). Ser-89 is modified (phosphoserine). At Thr-94 the chain carries Phosphothreonine. Residue Ser-275 is modified to Phosphoserine. Disordered stretches follow at residues 282–309 (DFSKGLGGQQKGHTSPCGMKQRLDKGPP) and 431–476 (WDPS…PELQ). A helical transmembrane segment spans residues 509 to 529 (LASFLFLYCACMSPVITFGGL). The Extracellular portion of the chain corresponds to 530-537 (LGEATEGR). Residues 538–558 (ISAIESLFGASMTGIAYSLFG) traverse the membrane as a helical segment. The Cytoplasmic portion of the chain corresponds to 559–561 (GQP). Residues 562–582 (LTILGSTGPVLVFEKILFKFC) traverse the membrane as a helical segment. Topologically, residues 583–595 (KEYGLSYLSLRAS) are extracellular. Residues 596–616 (IGLWTATLCIILVATDASSLV) form a helical membrane-spanning segment. Residues 617-625 (CYITRFTEE) are Cytoplasmic-facing. Residues 626-646 (AFASLICIIFIYEALEKLFEL) form a helical membrane-spanning segment. Residues 647-719 (SESYPINMHN…VGRACGHGHP (73 aa)) are Extracellular-facing. 3 N-linked (GlcNAc...) asparagine glycosylation sites follow: Asn-676, Asn-686, and Asn-696. The chain crosses the membrane as a helical span at residues 720 to 740 (YVPDVLFWSVILFFSTVTMSA). Over 741-761 (TLKQFKTSRYFPTKVRSIVSD) the chain is Cytoplasmic. Residues 762-782 (FAVFLTILCMVLIDYAIGIPS) traverse the membrane as a helical segment. The Extracellular portion of the chain corresponds to 783 to 808 (PKLQVPSVFKPTRDDRGWFVTPLGPN). The helical transmembrane segment at 809–829 (PWWTIIAAIIPALLCTILIFM) threads the bilayer. Over 830–854 (DQQITAVIINRKEHKLKKGCGYHLD) the chain is Cytoplasmic. Residues 855–875 (LLMVAVMLGVCSIMGLPWFVA) traverse the membrane as a helical segment. Over 876-911 (ATVLSITHVNSLKLESECSAPGEQPKFLGIREQRVT) the chain is Extracellular. Residues 912–932 (GLMIFILMGSSVFMTSILKFI) form a helical membrane-spanning segment. The Cytoplasmic segment spans residues 933–934 (PM). Residues 935–955 (PVLYGVFLYMGASSLKGIQLF) form a helical membrane-spanning segment. The Extracellular portion of the chain corresponds to 956 to 997 (DRIKLFWMPAKHQPDFIYLRHVPLRKVHLFTVIQMSCLGLLW). The helical transmembrane segment at 998–1018 (IIKVSRAAIVFPMMVLALVFV) threads the bilayer. Residues 1019–1117 (RKLMDFLFTK…SRFPSKSSPS (99 aa)) are Cytoplasmic-facing. A phosphoserine mark is found at Ser-1056 and Ser-1084.

It belongs to the anion exchanger (TC 2.A.31) family. Post-translationally, N-glycosylated. In terms of tissue distribution, in the brain, detected in cerebral cortex, subcortex, cerebellum, hippocampus and medulla (at protein level). Expressed in neurons but not in astrocytes (at protein level). Isoforms starting with Met-Glu-Ile-Lys are found predominantly in the brain with lower levels in the eye while isoforms starting with Met-Cys-Asp-Leu are most abundant in the kidney with lower levels in the duodenum, jejunum and ileum (at protein level). In the kidney, isoforms starting with Met-Cys-Asp-Leu are primarily expressed in the cortex, the outer stripe of the outer medulla and the inner stripe of the outer medulla (ISOM) but are not detectable in the inner medulla (IM) while isoforms starting with Met-Glu-Ile-Lys are predominantly expressed in the ISOM and IM. Expressed in the brain, in the hippocampus as well as in dentate gyrus, cortical layers, cerebellum, olfactory bulb and in the epithelial cells of the choroid plexus. Detected in pituitary, testis, kidney and ileum. Detected also in spleen and lung. Mainly expressed in the jejenum (at protein level).

It is found in the basolateral cell membrane. It localises to the apical cell membrane. The protein localises to the cell projection. Its subcellular location is the dendrite. The protein resides in the axon. It is found in the perikaryon. It localises to the presynapse. The protein localises to the postsynapse. The enzyme catalyses 2 hydrogencarbonate(out) + chloride(in) + Na(+)(out) = 2 hydrogencarbonate(in) + chloride(out) + Na(+)(in). Functionally, sodium/bicarbonate cotransporter which plays an important role in regulating intracellular pH. Has been shown to act as a sodium/bicarbonate cotransporter in exchange for intracellular chloride. Has also been shown to act as a sodium/biocarbonate cotransporter which does not couple net influx of bicarbonate to net efflux of chloride, with the observed chloride efflux being due to chloride self-exchange. Controls neuronal pH and may contribute to the secretion of cerebrospinal fluid. Acting on presynaptic intracellular pH, it promotes GABA release, reduces the excitability of CA1 pyramidal neurons, and modulates short-term synaptic plasticity. Required in retinal cells to maintain normal pH which is necessary for normal vision. In the kidney, likely to mediate bicarbonate reclamation in the apical membrane of the proximal tubules. Its function is as follows. Sodium/bicarbonate cotransporter which mediates cotransport of sodium and bicarbonate in association with an efflux of intracellular chloride and is involved in NaCl absorption in the small intestine. In Rattus norvegicus (Rat), this protein is Sodium-driven chloride bicarbonate exchanger.